Consider the following 147-residue polypeptide: Calcium-regulated heat-stable protein 1 (147 aa).

Over residues 1-12 (MSSEPPPPPQPP) the composition is skewed to pro residues. The disordered stretch occupies residues 1-52 (MSSEPPPPPQPPTHQASVGLLDTPRSRERSPSPLRGNVVPSPLPTRRTRTFS). The residue at position 2 (serine 2) is an N-acetylserine. A phosphoserine mark is found at serine 30, serine 32, and serine 41. Threonine 45 is subject to Phosphothreonine. Phosphoserine is present on residues serine 52 and serine 58. The region spanning 62 to 129 (VYKGVCKCFC…KLQAVEVVIT (68 aa)) is the CSD domain. Phosphoserine is present on residues serine 146 and serine 147.

Homodimer. Interacts with STYX. In terms of processing, dephosphorylated by calcineurin in a Ca(2+) dependent manner. Can be phosphorylated by DYRK2 (in vitro).

The protein localises to the cytoplasm. It localises to the P-body. The protein resides in the cytoplasmic granule. Its function is as follows. Binds mRNA and regulates the stability of target mRNA. Binds single-stranded DNA (in vitro). The polypeptide is Calcium-regulated heat-stable protein 1 (CARHSP1) (Homo sapiens (Human)).